The sequence spans 44 residues: Photosystem I reaction center subunit IX (44 aa).

The chain crosses the membrane as a helical span at residues Y7 to I27.

The protein belongs to the PsaJ family.

Its subcellular location is the plastid. It is found in the chloroplast thylakoid membrane. Its function is as follows. May help in the organization of the PsaE and PsaF subunits. The polypeptide is Photosystem I reaction center subunit IX (Coffea arabica (Arabian coffee)).